The primary structure comprises 432 residues: UPF0761 membrane protein Cag_0935 (432 aa).

6 consecutive transmembrane segments (helical) span residues leucine 52 to phenylalanine 72, asparagine 108 to valine 128, phenylalanine 148 to alanine 168, leucine 190 to valine 210, alanine 220 to phenylalanine 240, and alanine 254 to valine 274.

This sequence belongs to the UPF0761 family.

The protein resides in the cell inner membrane. This is UPF0761 membrane protein Cag_0935 from Chlorobium chlorochromatii (strain CaD3).